The sequence spans 420 residues: Serine protease inhibitor A3B (420 aa).

Residues 1–17 form the signal peptide; sequence MAFIAALGLLMAEICPA. Asn-104 and Asn-349 each carry an N-linked (GlcNAc...) asparagine glycan. Residues 367–392 form an RCL region; it reads GTEGDAITIVGYNFMSAKLKPVFVKF.

The protein belongs to the serpin family.

Its subcellular location is the secreted. The sequence is that of Serine protease inhibitor A3B (Serpina3b) from Mus musculus (Mouse).